Here is a 173-residue protein sequence, read N- to C-terminus: Co-chaperone protein HscB homolog (173 aa).

The 73-residue stretch at 5–77 (CHYALFDLQP…PRRARYLLAI (73 aa)) folds into the J domain.

The protein belongs to the HscB family. As to quaternary structure, interacts with HscA and stimulates its ATPase activity.

In terms of biological role, co-chaperone involved in the maturation of iron-sulfur cluster-containing proteins. Seems to help targeting proteins to be folded toward HscA. The chain is Co-chaperone protein HscB homolog from Pseudomonas putida (strain ATCC 700007 / DSM 6899 / JCM 31910 / BCRC 17059 / LMG 24140 / F1).